Reading from the N-terminus, the 534-residue chain is Probable alpha-galactosidase A (534 aa).

The signal sequence occupies residues 1–25 (MRLITRWIPLANALASTMPVQVVAS). A disulfide bond links C47 and C79. N-linked (GlcNAc...) asparagine glycans are attached at residues N50, N88, N94, and N124. Cysteines 127 and 157 form a disulfide. D155 acts as the Nucleophile in catalysis. An N-linked (GlcNAc...) asparagine glycan is attached at N204. D213 functions as the Proton donor in the catalytic mechanism. Positions 413–534 (CSQVIPTGLI…GLPAGVHVAL (122 aa)) constitute a Ricin B-type lectin domain. The cysteines at positions 430 and 443 are disulfide-linked. N444 carries N-linked (GlcNAc...) asparagine glycosylation. Cysteines 468 and 481 form a disulfide.

The protein belongs to the glycosyl hydrolase 27 family.

Its subcellular location is the secreted. The catalysed reaction is Hydrolysis of terminal, non-reducing alpha-D-galactose residues in alpha-D-galactosides, including galactose oligosaccharides, galactomannans and galactolipids.. Hydrolyzes a variety of simple alpha-D-galactoside as well as more complex molecules such as oligosaccharides and polysaccharides. This Aspergillus flavus (strain ATCC 200026 / FGSC A1120 / IAM 13836 / NRRL 3357 / JCM 12722 / SRRC 167) protein is Probable alpha-galactosidase A (aglA).